Here is a 425-residue protein sequence, read N- to C-terminus: Serine--tRNA ligase (425 aa).

Residue 230 to 232 participates in L-serine binding; it reads TAE. Residue 261-263 participates in ATP binding; the sequence is RSE. An L-serine-binding site is contributed by glutamate 284. 348–351 serves as a coordination point for ATP; the sequence is EISS. Serine 384 lines the L-serine pocket.

It belongs to the class-II aminoacyl-tRNA synthetase family. Type-1 seryl-tRNA synthetase subfamily. Homodimer. The tRNA molecule binds across the dimer.

It is found in the cytoplasm. It carries out the reaction tRNA(Ser) + L-serine + ATP = L-seryl-tRNA(Ser) + AMP + diphosphate + H(+). It catalyses the reaction tRNA(Sec) + L-serine + ATP = L-seryl-tRNA(Sec) + AMP + diphosphate + H(+). It participates in aminoacyl-tRNA biosynthesis; selenocysteinyl-tRNA(Sec) biosynthesis; L-seryl-tRNA(Sec) from L-serine and tRNA(Sec): step 1/1. Catalyzes the attachment of serine to tRNA(Ser). Is also able to aminoacylate tRNA(Sec) with serine, to form the misacylated tRNA L-seryl-tRNA(Sec), which will be further converted into selenocysteinyl-tRNA(Sec). This chain is Serine--tRNA ligase, found in Streptococcus pyogenes serotype M4 (strain MGAS10750).